Here is a 427-residue protein sequence, read N- to C-terminus: Homogentisate 1,2-dioxygenase (427 aa).

Catalysis depends on His-285, which acts as the Proton acceptor. Fe cation-binding residues include His-328 and Glu-334. Homogentisate is bound by residues Tyr-343 and His-364. His-364 contacts Fe cation.

The protein belongs to the homogentisate dioxygenase family. As to quaternary structure, hexamer; dimer of trimers. Fe cation is required as a cofactor.

The enzyme catalyses homogentisate + O2 = 4-maleylacetoacetate + H(+). The protein operates within amino-acid degradation; L-phenylalanine degradation; acetoacetate and fumarate from L-phenylalanine: step 4/6. In terms of biological role, involved in the catabolism of homogentisate (2,5-dihydroxyphenylacetate or 2,5-OH-PhAc), a central intermediate in the degradation of phenylalanine and tyrosine. Catalyzes the oxidative ring cleavage of the aromatic ring of homogentisate to yield maleylacetoacetate. The sequence is that of Homogentisate 1,2-dioxygenase from Caulobacter sp. (strain K31).